The primary structure comprises 320 residues: Beta-ketoacyl-[acyl-carrier-protein] synthase III (320 aa).

Catalysis depends on residues Cys112 and His245. The interval 246–250 (QANIR) is ACP-binding. Residue Asn275 is part of the active site.

It belongs to the thiolase-like superfamily. FabH family. As to quaternary structure, homodimer.

The protein resides in the cytoplasm. The enzyme catalyses malonyl-[ACP] + acetyl-CoA + H(+) = 3-oxobutanoyl-[ACP] + CO2 + CoA. It functions in the pathway lipid metabolism; fatty acid biosynthesis. Its function is as follows. Catalyzes the condensation reaction of fatty acid synthesis by the addition to an acyl acceptor of two carbons from malonyl-ACP. Catalyzes the first condensation reaction which initiates fatty acid synthesis and may therefore play a role in governing the total rate of fatty acid production. Possesses both acetoacetyl-ACP synthase and acetyl transacylase activities. Its substrate specificity determines the biosynthesis of branched-chain and/or straight-chain of fatty acids. The polypeptide is Beta-ketoacyl-[acyl-carrier-protein] synthase III (Streptococcus thermophilus (strain CNRZ 1066)).